We begin with the raw amino-acid sequence, 448 residues long: Oxysterol-binding protein homolog 6 (448 aa).

A disordered region spans residues 1–42; that stretch reads MGSKKLTVGSDSHRLSKSSFSSNKSSHSATKDQPIDTDDIDE. Ser16 bears the Phosphoserine mark. Positions 17 to 28 are enriched in low complexity; it reads KSSFSSNKSSHS. Residues 54 to 391 are OSBP-related domain (ORD); it reads IISQLRPGCD…PGEDLDYCIY (338 aa). Residues 64–69, 126–129, and 157–158 each bind a 1,2-diacyl-sn-glycero-3-phospho-(1D-myo-inositol 4-phosphate); these read LTRITL, KPLN, and HH. A 1,2-diacyl-sn-glycero-3-phospho-L-serine contacts are provided by residues 64–69 and Asn129; that span reads LTRITL. Ser183 provides a ligand contact to a 1,2-diacyl-sn-glycero-3-phospho-L-serine. A 1,2-diacyl-sn-glycero-3-phospho-(1D-myo-inositol 4-phosphate) contacts are provided by Lys351, Glu355, and Arg359.

It belongs to the OSBP family. In terms of assembly, interacts with the AAA ATPase VPS4; regulates OSH6 membrane association. VPS4 is required for membrane dissociation of OSH6.

It localises to the cytoplasm. The protein localises to the cell membrane. Its subcellular location is the endoplasmic reticulum membrane. It catalyses the reaction a 1,2-diacyl-sn-glycero-3-phospho-L-serine(in) = a 1,2-diacyl-sn-glycero-3-phospho-L-serine(out). Its function is as follows. Lipid transport protein (LTP) involved in non-vesicular transfer of lipids between membranes. Functions in phosphoinositide-coupled directional transport of various lipids by carrying the lipid molecule in a hydrophobic pocket and transferring it between membranes through the cytosol. Involved in maintenance of intracellular sterol distribution and homeostasis. Catalyzes the lipid countertransport between the endoplasmic reticulum (ER) and the plasma membrane (PM). Specifically exchanges phosphatidylserine (PS) with phosphatidylinositol 4-phosphate (PI4P), delivering phosphatidylserine to the PM in exchange for PI4P, which is delivered to the ER-localized PI4P phosphatase SAC1 for degradation. Thus, by maintaining a PI4P gradient at the ER/PM interface, SAC1 drives PS transport. Binds phosphatidylserine and PI4P in a mutually exclusive manner. Also binds phosphatidic acid (PA). The sequence is that of Oxysterol-binding protein homolog 6 from Saccharomyces cerevisiae (strain ATCC 204508 / S288c) (Baker's yeast).